Here is a 161-residue protein sequence, read N- to C-terminus: 6,7-dimethyl-8-ribityllumazine synthase (161 aa).

5-amino-6-(D-ribitylamino)uracil contacts are provided by residues Trp26, 58 to 60 (AFE), and 81 to 83 (VVI). 86–87 (GT) lines the (2S)-2-hydroxy-3-oxobutyl phosphate pocket. The active-site Proton donor is His89. Phe114 provides a ligand contact to 5-amino-6-(D-ribitylamino)uracil. Arg128 contributes to the (2S)-2-hydroxy-3-oxobutyl phosphate binding site.

The protein belongs to the DMRL synthase family.

The enzyme catalyses (2S)-2-hydroxy-3-oxobutyl phosphate + 5-amino-6-(D-ribitylamino)uracil = 6,7-dimethyl-8-(1-D-ribityl)lumazine + phosphate + 2 H2O + H(+). It participates in cofactor biosynthesis; riboflavin biosynthesis; riboflavin from 2-hydroxy-3-oxobutyl phosphate and 5-amino-6-(D-ribitylamino)uracil: step 1/2. Its function is as follows. Catalyzes the formation of 6,7-dimethyl-8-ribityllumazine by condensation of 5-amino-6-(D-ribitylamino)uracil with 3,4-dihydroxy-2-butanone 4-phosphate. This is the penultimate step in the biosynthesis of riboflavin. The chain is 6,7-dimethyl-8-ribityllumazine synthase from Nocardioides sp. (strain ATCC BAA-499 / JS614).